The following is a 125-amino-acid chain: Large ribosomal subunit protein eL22 (125 aa).

This sequence belongs to the eukaryotic ribosomal protein eL22 family. As to quaternary structure, component of the large ribosomal subunit.

The protein localises to the cytoplasm. Functionally, component of the large ribosomal subunit. The ribosome is a large ribonucleoprotein complex responsible for the synthesis of proteins in the cell. The sequence is that of Large ribosomal subunit protein eL22 (rpl22) from Gadus morhua (Atlantic cod).